The primary structure comprises 514 residues: MNPDLDTGHNTSAPAHWGELKDANFTGPNQTSSNSTLPQLDVTRAISVGCLGAFILFAIVGNILVILSVACNRHLRTPTNYFIVNLAIADLLLSFTDLPFSATLEVLGYWVLGRIFCDIWAAVDVLCCTASILSLCAISIDRYIGVRYSLQYPTLVTRRKAILALLSVWVLSTVISIGPLLGWKEPAPNDDKECGVTEEPFYALFSSLGSFYIPLAVILVMYCRVYIVAKRTTKNLEAGVMKEMSNSKELTLRIHSKNFHEDTLSSTKAKGHNPRSSIAVKLFKFSREKKAAKTLGIVVGMFILCWLPFFIALPLGSLFSTLKPPDAVFKVVFWLGYFNSCLNPIIYPCSSKEFKRAFMRILGCQCRGGRRRRRRRRLGACAYTYRPWTRGGSLERSQSRKDSLDDSGSCMSGSQRTLPSASPSPGYLGRGTQPPVELCAFPEWKPGALLSLPEPPGRRGRLDSGPLFTFKLLGEPESPGTEGDASNGGCDTTTDLANGQPGFKSNMPLAPGHF.

Over 1-45 (MNPDLDTGHNTSAPAHWGELKDANFTGPNQTSSNSTLPQLDVTRA) the chain is Extracellular. N-linked (GlcNAc...) asparagine glycans are attached at residues Asn-10, Asn-24, Asn-29, and Asn-34. A helical transmembrane segment spans residues 46-69 (ISVGCLGAFILFAIVGNILVILSV). Residues 70 to 82 (ACNRHLRTPTNYF) are Cytoplasmic-facing. A helical transmembrane segment spans residues 83-104 (IVNLAIADLLLSFTDLPFSATL). The Extracellular segment spans residues 105-114 (EVLGYWVLGR). Residues 115 to 140 (IFCDIWAAVDVLCCTASILSLCAISI) form a helical membrane-spanning segment. A disulfide bridge links Cys-117 with Cys-194. Over 141–160 (DRYIGVRYSLQYPTLVTRRK) the chain is Cytoplasmic. The helical transmembrane segment at 161–183 (AILALLSVWVLSTVISIGPLLGW) threads the bilayer. Topologically, residues 184–200 (KEPAPNDDKECGVTEEP) are extracellular. A helical membrane pass occupies residues 201 to 223 (FYALFSSLGSFYIPLAVILVMYC). Over 224–294 (RVYIVAKRTT…FSREKKAAKT (71 aa)) the chain is Cytoplasmic. Thr-263 carries the phosphothreonine modification. The chain crosses the membrane as a helical span at residues 295–318 (LGIVVGMFILCWLPFFIALPLGSL). At 319 to 325 (FSTLKPP) the chain is on the extracellular side. Residues 326–350 (DAVFKVVFWLGYFNSCLNPIIYPCS) form a helical membrane-spanning segment. The Cytoplasmic portion of the chain corresponds to 351–514 (SKEFKRAFMR…SNMPLAPGHF (164 aa)). Cys-364 is lipidated: S-palmitoyl cysteine. The Nuclear localization signal motif lies at 367 to 377 (RGGRRRRRRRR). 2 disordered regions span residues 391–429 (GGSL…GYLG) and 473–514 (LGEP…PGHF). Residues 409-423 (SCMSGSQRTLPSASP) show a composition bias toward polar residues.

Belongs to the G-protein coupled receptor 1 family. Adrenergic receptor subfamily. ADRA1B sub-subfamily. Homo- and heterooligomer. Heterooligomerizes with ADRA1B homooligomers in cardiac myocytes. Interacts with CAVIN4.

The protein localises to the nucleus membrane. It is found in the cell membrane. Its subcellular location is the cytoplasm. The protein resides in the membrane. It localises to the caveola. This alpha-adrenergic receptor mediates its action by association with G proteins that activate a phosphatidylinositol-calcium second messenger system. Its effect is mediated by G(q) and G(11) proteins. Nuclear ADRA1A-ADRA1B heterooligomers regulate phenylephrine (PE)-stimulated ERK signaling in cardiac myocytes. This is Alpha-1B adrenergic receptor (Adra1b) from Mus musculus (Mouse).